The chain runs to 101 residues: NAD(P)H-quinone oxidoreductase subunit 4L, chloroplastic (101 aa).

The next 3 membrane-spanning stretches (helical) occupy residues Met-2–Ile-22, Met-32–Phe-52, and Ile-61–Val-81.

This sequence belongs to the complex I subunit 4L family. In terms of assembly, NDH is composed of at least 16 different subunits, 5 of which are encoded in the nucleus.

The protein resides in the plastid. Its subcellular location is the chloroplast thylakoid membrane. It catalyses the reaction a plastoquinone + NADH + (n+1) H(+)(in) = a plastoquinol + NAD(+) + n H(+)(out). It carries out the reaction a plastoquinone + NADPH + (n+1) H(+)(in) = a plastoquinol + NADP(+) + n H(+)(out). Its function is as follows. NDH shuttles electrons from NAD(P)H:plastoquinone, via FMN and iron-sulfur (Fe-S) centers, to quinones in the photosynthetic chain and possibly in a chloroplast respiratory chain. The immediate electron acceptor for the enzyme in this species is believed to be plastoquinone. Couples the redox reaction to proton translocation, and thus conserves the redox energy in a proton gradient. The sequence is that of NAD(P)H-quinone oxidoreductase subunit 4L, chloroplastic from Ceratophyllum demersum (Rigid hornwort).